Here is a 283-residue protein sequence, read N- to C-terminus: Nucleotide-binding protein ACIAD3059 (283 aa).

An ATP-binding site is contributed by 9-16 (GQSGSGKS). 59 to 62 (DVRS) is a binding site for GTP.

Belongs to the RapZ-like family.

Functionally, displays ATPase and GTPase activities. This Acinetobacter baylyi (strain ATCC 33305 / BD413 / ADP1) protein is Nucleotide-binding protein ACIAD3059.